Here is a 120-residue protein sequence, read N- to C-terminus: uncharacterized protein (120 aa).

The helical transmembrane segment at isoleucine 63–isoleucine 83 threads the bilayer.

It is found in the membrane. This is an uncharacterized protein from Saccharomyces cerevisiae (strain ATCC 204508 / S288c) (Baker's yeast).